Reading from the N-terminus, the 870-residue chain is Valine--tRNA ligase (870 aa).

Over residues 1–13 (MTSQTFTTSSATP) the composition is skewed to polar residues. The interval 1–21 (MTSQTFTTSSATPPTRGVVPD) is disordered. A 'HIGH' region motif is present at residues 63–73 (PTVSGHLHPGH). The interval 479–505 (YDHPLLPDESALPVDPASQPPSGYQES) is disordered. Residues 595–599 (KMSKS) carry the 'KMSKS' region motif. Lys598 serves as a coordination point for ATP.

Belongs to the class-I aminoacyl-tRNA synthetase family. ValS type 2 subfamily. As to quaternary structure, monomer.

It is found in the cytoplasm. The catalysed reaction is tRNA(Val) + L-valine + ATP = L-valyl-tRNA(Val) + AMP + diphosphate. Functionally, catalyzes the attachment of valine to tRNA(Val). As ValRS can inadvertently accommodate and process structurally similar amino acids such as threonine, to avoid such errors, it has a 'posttransfer' editing activity that hydrolyzes mischarged Thr-tRNA(Val) in a tRNA-dependent manner. This Cutibacterium acnes (strain DSM 16379 / KPA171202) (Propionibacterium acnes) protein is Valine--tRNA ligase.